The sequence spans 188 residues: GMP synthase [glutamine-hydrolyzing] subunit A (188 aa).

Positions 1-188 constitute a Glutamine amidotransferase type-1 domain; the sequence is MIVIMDNGGQ…RNFAKLCGEL (188 aa). C78 serves as the catalytic Nucleophile. Residues H165 and E167 contribute to the active site.

As to quaternary structure, heterodimer composed of a glutamine amidotransferase subunit (A) and a GMP-binding subunit (B).

The catalysed reaction is XMP + L-glutamine + ATP + H2O = GMP + L-glutamate + AMP + diphosphate + 2 H(+). It functions in the pathway purine metabolism; GMP biosynthesis; GMP from XMP (L-Gln route): step 1/1. Its function is as follows. Catalyzes the synthesis of GMP from XMP. The sequence is that of GMP synthase [glutamine-hydrolyzing] subunit A from Pyrococcus abyssi (strain GE5 / Orsay).